A 74-amino-acid chain; its full sequence is Psi-conotoxin PrIIIE (74 aa).

The signal sequence occupies residues methionine 1–alanine 19. A propeptide spanning residues leucine 20 to arginine 50 is cleaved from the precursor. 3 cysteine pairs are disulfide-bonded: cysteine 54–cysteine 66, cysteine 55–cysteine 71, and cysteine 61–cysteine 72. Cysteine 72 carries the post-translational modification Cysteine amide.

The protein belongs to the conotoxin M superfamily. In terms of tissue distribution, expressed by the venom duct.

It localises to the secreted. Psi-conotoxins act on postsynaptic membranes, and act as non-competitive antagonist of nicotinic acetylcholine receptors (nAChR). Reversibly inhibits both adult- and fetal-types nAChR. The inhibition potency against the adult- (alpha-1/beta-1/epsilon/delta) is higher than against the fetal-type (alpha-1/beta-1/gamma/delta). Induces flaccid paralysis in goldfish, but does not induce any remarkable behavior in mice and does not block action potential in directly stimulated frog muscle preparations. The protein is Psi-conotoxin PrIIIE of Conus parius (Cone snail).